The chain runs to 85 residues: Beta-insect depressant toxin BmKITb (85 aa).

Residues 1-21 (MKLFLLLVISASMLIDGLVNA) form the signal peptide. An LCN-type CS-alpha/beta domain is found at 22 to 82 (DGYIRGSNGC…TWKSESNTCG (61 aa)). 4 cysteine pairs are disulfide-bonded: cysteine 31–cysteine 81, cysteine 35–cysteine 56, cysteine 42–cysteine 63, and cysteine 46–cysteine 65. The residue at position 82 (glycine 82) is a Glycine amide.

In terms of tissue distribution, expressed by the venom gland.

Its subcellular location is the secreted. Depressant insect beta-toxins cause a transient contraction paralysis followed by a slow flaccid paralysis. They bind voltage-independently at site-4 of sodium channels (Nav) and shift the voltage of activation toward more negative potentials thereby affecting sodium channel activation and promoting spontaneous and repetitive firing. However, this toxin has some characteristics of excitatory toxins such as bursts of activity after the membrane has been hyperpolarized. This toxin is active only on insects. The polypeptide is Beta-insect depressant toxin BmKITb (Olivierus martensii (Manchurian scorpion)).